A 120-amino-acid polypeptide reads, in one-letter code: MFLLFEYETFWIFLLISSLMPILAFLISRALAPISEGPEKLTSYESGIEAMGDAWIQFRIRYYMFALVFVVFDVETVFLYPWAMSFDILGISTFIEASIFVLILIVGSVHAWRRGALEWS.

3 helical membrane-spanning segments follow: residues 7–27 (YETFWIFLLISSLMPILAFLI), 64–84 (MFALVFVVFDVETVFLYPWAM), and 88–108 (ILGISTFIEASIFVLILIVGS).

It belongs to the complex I subunit 3 family. NDH is composed of at least 16 different subunits, 5 of which are encoded in the nucleus.

It localises to the plastid. Its subcellular location is the chloroplast thylakoid membrane. It carries out the reaction a plastoquinone + NADH + (n+1) H(+)(in) = a plastoquinol + NAD(+) + n H(+)(out). It catalyses the reaction a plastoquinone + NADPH + (n+1) H(+)(in) = a plastoquinol + NADP(+) + n H(+)(out). Functionally, NDH shuttles electrons from NAD(P)H:plastoquinone, via FMN and iron-sulfur (Fe-S) centers, to quinones in the photosynthetic chain and possibly in a chloroplast respiratory chain. The immediate electron acceptor for the enzyme in this species is believed to be plastoquinone. Couples the redox reaction to proton translocation, and thus conserves the redox energy in a proton gradient. The protein is NAD(P)H-quinone oxidoreductase subunit 3, chloroplastic of Cycas taitungensis (Prince sago).